Reading from the N-terminus, the 420-residue chain is Amino acid decarboxylase lolD1 (420 aa).

Lys-62 is modified (N6-(pyridoxal phosphate)lysine). Pyridoxal 5'-phosphate is bound by residues Ser-194, Gly-231, and 266-269 (EPGT). 315-316 (IV) is a substrate binding site. Catalysis depends on Cys-351, which acts as the Proton donor; shared with dimeric partner. Residue Cys-351 is modified to S-nitrosocysteine. Asp-352 is a binding site for substrate. A pyridoxal 5'-phosphate-binding site is contributed by Tyr-381.

The protein belongs to the Orn/Lys/Arg decarboxylase class-II family. As to quaternary structure, homodimer. The cofactor is pyridoxal 5'-phosphate.

It functions in the pathway alkaloid biosynthesis. Functionally, amino acid decarboxylase; part of the gene cluster that mediates the biosynthesis of loline alkaloids, potent insecticidal agents composed of a pyrrolizidine ring system and an uncommon ether bridge linking carbons 2 and 7. Lolines are structurally differentiated by the various modifications of the L-amino group and include norloline, loline, N-methylloline, N-acetylloline, N-acetylnorloline, and N-formylloline. The first committed step is the condensation of O-acetyl-L-homoserine (derived from L-aspartic acid) and L-proline, probably catalyzed by the gamma-type pyridoxal 5'-phosphate(PLP)-dependent enzyme lolC, to give the diamino diacid, NACPP. Ensuing cyclization, decarboxylation, and acetylation steps yield 1-exo-acetamidopyrrolizidine (AcAP). LolO is required for installation of the ether bridge upon the pathway intermediate, 1-exo-acetamidopyrrolizidine (AcAP). In sequential 2-oxoglutarate- and O(2)-consuming steps, lolO removes hydrogens from C2 and C7 of AcAP to form both carbon-oxygen bonds in N-acetylnorloline (NANL), the precursor to all other lolines. The enzymes lolD, lolE, lolF and lolT have also been proposed to be involved in the ether-bridge installation. Further processing of the exocyclic moiety of NANL by fungal N-acetamidase (LolN), methyltransferase (LolM), and cytochrome P450 (LolP) enzymes, with occasional involvement of a plant acetyltransferase, generates the other known lolines. LolN transforms NANL to norlonine which is monomethylated and dimethylated to respectively lonine and N-methyllonine (NML) by lolM. LolP catalyzes hydroxylation of the methyl group in N-methylloline (NML) and further oxygenation to N-formylloline (NFL). A plant acetyltransferase is responsible for the acetylation of loline to form N-acetylloline (NAL). LolA might interact with aspartate kinase to prevent feedback inhibition of its activity by these end products and thereby promote production of L-homoserine from L-aspartate. In Epichloe uncinata (Endophyte fungus), this protein is Amino acid decarboxylase lolD1.